The primary structure comprises 163 residues: Ureidoglycolate lyase 2 (163 aa).

It belongs to the ureidoglycolate lyase family. Homodimer. It depends on Ni(2+) as a cofactor.

It catalyses the reaction (S)-ureidoglycolate = urea + glyoxylate. It functions in the pathway nitrogen metabolism; (S)-allantoin degradation. Functionally, catalyzes the catabolism of the allantoin degradation intermediate (S)-ureidoglycolate, generating urea and glyoxylate. Involved in the utilization of allantoin as nitrogen source. The sequence is that of Ureidoglycolate lyase 2 from Rhizobium meliloti (strain 1021) (Ensifer meliloti).